Here is a 249-residue protein sequence, read N- to C-terminus: Phosphomannomutase (249 aa).

Aspartate 15 functions as the Nucleophile in the catalytic mechanism. Mg(2+) is bound by residues aspartate 15 and aspartate 17. Aspartate 17 acts as the Proton donor/acceptor in catalysis. Arginine 24, arginine 126, arginine 137, arginine 144, serine 182, and aspartate 184 together coordinate alpha-D-mannose 1-phosphate. The Mg(2+) site is built by aspartate 210, phenylalanine 222, and threonine 227.

Belongs to the eukaryotic PMM family. As to quaternary structure, homodimer. The cofactor is Mg(2+). Expressed in roots, leaves, flag leaves and immature spikes.

It localises to the cytoplasm. The catalysed reaction is alpha-D-mannose 1-phosphate = D-mannose 6-phosphate. Its pathway is nucleotide-sugar biosynthesis; GDP-alpha-D-mannose biosynthesis; alpha-D-mannose 1-phosphate from D-fructose 6-phosphate: step 2/2. Catalyzes the interconversion of mannose-6-phosphate to mannose-1-phosphate, the precursor for the synthesis of GDP-mannose. GDP-mannose is an essential sugar nucleotide for the synthesis of D-mannose-containing cell wall polysaccharides (galactomannans and glucomannans), glycolipids, glycoproteins and the antioxidant L-ascorbate. Can complement the yeast temperature-sensitive mutant sec53-6. In Triticum aestivum (Wheat), this protein is Phosphomannomutase.